Consider the following 107-residue polypeptide: MMNLVNKSLEENGSFLTAVYIFCAFVALYLLGRALHAFVQAADACCLFWYTWVVVPGAKGTAFVYKHTYGKKLNNPELESVIVNEFPKNGWNNKSPANFQNDGKLHS.

At 1–11 (MMNLVNKSLEE) the chain is on the virion surface side. The helical transmembrane segment at 12-32 (NGSFLTAVYIFCAFVALYLLG) threads the bilayer. Topologically, residues 33 to 107 (RALHAFVQAA…NFQNDGKLHS (75 aa)) are intravirion.

Belongs to the gammacoronaviruses E protein family. Homooligomer. Interacts with the M membrane protein in the budding compartment of the host cell, which is located between endoplasmic reticulum and the Golgi complex. The cytoplasmic tails of both proteins are important for this function. Interacts with Nucleoprotein.

It localises to the host Golgi apparatus membrane. In terms of biological role, plays a central role in virus morphogenesis and assembly. Acts as a viroporin and self-assembles in host membranes forming pentameric protein-lipid pores that allow ion transport. Also plays a role in the induction of apoptosis. The chain is Envelope small membrane protein from Gallus gallus (Chicken).